A 695-amino-acid chain; its full sequence is Potassium voltage-gated channel subfamily KQT member 4 (695 aa).

The interval Met1 to Ala21 is disordered. The Cytoplasmic segment spans residues Met1–Gly96. Residue Arg93 coordinates a 1,2-diacyl-sn-glycero-3-phospho-(1D-myo-inositol-4,5-bisphosphate). A helical transmembrane segment spans residues Trp97–Leu118. Topologically, residues Ser119 to Asn129 are extracellular. The helical transmembrane segment at Glu130–Trp152 threads the bilayer. Residues Ser153–Arg168 are Cytoplasmic-facing. Residues Phe169 to Ala191 form a helical membrane-spanning segment. Residue Lys172 participates in a 1,2-diacyl-sn-glycero-3-phospho-(1D-myo-inositol-4,5-bisphosphate) binding. Topologically, residues Gly192 to Ala202 are extracellular. The chain crosses the membrane as a helical; Voltage-sensor span at residues Leu203 to Thr223. Residues Arg219, Arg220, Lys225, and Ser235 each contribute to the a 1,2-diacyl-sn-glycero-3-phospho-(1D-myo-inositol-4,5-bisphosphate) site. At Trp224–Ser235 the chain is on the cytoplasmic side. Residues Lys236–Leu258 traverse the membrane as a helical segment. The Extracellular segment spans residues Ala259–Tyr270. Residues Ala271 to His292 constitute an intramembrane region (pore-forming). Residue Thr293 is a topological domain, extracellular. A helical transmembrane segment spans residues Trp294–Phe322. The Cytoplasmic portion of the chain corresponds to Ala323–Asp695. 2 residues coordinate a 1,2-diacyl-sn-glycero-3-phospho-(1D-myo-inositol-4,5-bisphosphate): His330 and Lys333. Positions Ala342–Arg351 are interaction with CALM. Disordered regions lie at residues Arg400–Gln480 and Arg496–Lys515. Polar residues-rich tracts occupy residues Gly443 to Ser452 and Thr463 to Gln480. Residues Arg535 to Phe549 are interaction with CALM. The tract at residues Lys546–Ala650 is C-terminal assembly domain (tetramerization). Residues Val587–Asp606 are disordered. Residues Pro591 to Ser605 are compositionally biased toward basic and acidic residues. Positions Met615–Leu636 form a coiled coil.

Belongs to the potassium channel family. KQT (TC 1.A.1.15) subfamily. Kv7.4/KCNQ4 sub-subfamily. As to quaternary structure, homotetramer. Interacts (via C-terminus) with calmodulin; forms a heterooctameric structure (with 4:4 KCNQ1:CALM stoichiometry); the interaction is calcium-independent, constitutive, participates in the proper assembly of a functional channel. The interaction with calcium-free CALM controls channel trafficking whereas interaction with calcium-bound CALM regulates channel gating. May form a functional heteromultimeric channel with KCNQ3. Interacts with HSP90AB1; promotes cell surface expression of KCNQ4. In terms of tissue distribution, expressed in the outer, but not the inner, sensory hair cells of the cochlea. Slightly expressed in heart, brain and skeletal muscle.

The protein localises to the basal cell membrane. The enzyme catalyses K(+)(in) = K(+)(out). Two molecules of phosphatidylinositol-4,5-bisphosphate (PIP2-I and PIP2-II) are essential to activate KCNQ4 channel by inducing the coupling of the voltage-sensing domain (VSD) and the pore-forming domain (PD). Upon channel activation, PIP2-I and PIP2-II disrupt the VSD-calmodulin/CALM interaction, causing the release of CALM from the VSD which triggers the opening of the gate. Calcium suppresses KCNQ4 channel current through calcium-bound CALM C-terminus. Therefore CALM acts as calcium sensor that controls channel activity. ML213 potentiates KCNQ4 channel. KCNQ4 channel is blocked by linopirdin, XE991 and bepridil, whereas clofilium is without significant effect. Muscarinic agonist oxotremorine-M strongly suppress KCNQ4 current in CHO cells in which cloned KCNQ4 channels were coexpressed with M1 muscarinic receptors. Pore-forming subunit of the voltage-gated potassium (Kv) channel involved in the regulation of sensory cells excitability in the cochlea. KCNQ4/Kv7.4 channel is composed of 4 pore-forming subunits assembled as tetramers. Promotes the outflow of potassium ions in the repolarization phase of action potential which plays a role in regulating membrane potential of excitable cells. The channel conducts a slowly activating and deactivating current. Current often shows some inward rectification at positive potentials. Channel may be selectively permeable in vitro to other cations besides potassium, in decreasing order of affinity K(+) = Rb(+) &gt; Cs(+) &gt; Na(+). Important for normal physiological function of inner ear such as sensory perception of sound. The protein is Potassium voltage-gated channel subfamily KQT member 4 of Homo sapiens (Human).